The sequence spans 107 residues: High mobility group protein HMG-I/HMG-Y (107 aa).

Positions 1–107 are disordered; that stretch reads MSESSSKSSQ…ISQESSEEEQ (107 aa). The residue at position 2 (S2) is an N-acetylserine. K7 carries the post-translational modification N6-acetyllysine. The residue at position 8 (S8) is an ADP-ribosylserine. Position 9 is an ADP-ribosylserine; alternate (S9). The residue at position 9 (S9) is a Phosphoserine; alternate. K15 carries the post-translational modification N6-acetyllysine; alternate. Residue K15 forms a Glycyl lysine isopeptide (Lys-Gly) (interchain with G-Cter in SUMO2); alternate linkage. A compositionally biased stretch (basic and acidic residues) spans 15–24; sequence KQEKDGTEKR. Residues 21 to 31 constitute a DNA-binding region (a.T hook 1); the sequence is TEKRGRGRPRK. R26 is subject to Asymmetric dimethylarginine; alternate. Residue R26 is modified to Omega-N-methylarginine; alternate. At R26 the chain carries Symmetric dimethylarginine; alternate. At S36 the chain carries Phosphoserine; by HIPK2 and CDC2. T39 is subject to Phosphothreonine. Residues S44 and S49 each carry the phosphoserine modification. T53 carries the post-translational modification Phosphothreonine; by HIPK2 and CDC2. 2 consecutive DNA-binding regions (a.T hook) follow at residues 53–63 and 78–89; these read TPKRPRGRPKG and APGRKPRGRPKK. The interval 53-77 is interaction with HIPK2; the sequence is TPKRPRGRPKGSKNKGAAKTRKATT. A compositionally biased stretch (basic residues) spans 55-74; sequence KRPRGRPKGSKNKGAAKTRK. Asymmetric dimethylarginine; by PRMT6; alternate occurs at positions 58 and 60. Residues R58 and R60 each carry the omega-N-methylarginine; by PRMT6; alternate modification. Over residues 93-107 the composition is skewed to acidic residues; sequence EEEEGISQESSEEEQ. S99, S102, and S103 each carry phosphoserine.

This sequence belongs to the HMGA family. Interacts with HIPK2. Post-translationally, isoforms HMG-I and HMG-Y can be phosphorylated by HIPK2. Phosphorylation may modulate DNA-binding affinity. Methylation at Arg-58 is mutually exclusive with methylation at Arg-60.

Its subcellular location is the nucleus. The protein resides in the chromosome. Functionally, HMG-I/Y bind preferentially to the minor groove of A+T rich regions in double-stranded DNA. It is suggested that these proteins could function in nucleosome phasing and in the 3'-end processing of mRNA transcripts. They are also involved in the transcription regulation of genes containing, or in close proximity to A+T-rich regions. The polypeptide is High mobility group protein HMG-I/HMG-Y (HMGA1) (Cricetulus griseus (Chinese hamster)).